A 652-amino-acid chain; its full sequence is DNA ligase (652 aa).

NAD(+) contacts are provided by residues 29 to 33 (DSEYD), 78 to 79 (SL), and Glu107. Lys109 (N6-AMP-lysine intermediate) is an active-site residue. Arg130, Glu164, Lys278, and Lys302 together coordinate NAD(+). Cys395, Cys398, Cys413, and Cys418 together coordinate Zn(2+). Residues 577 to 652 (DQQAALFGLT…IEDEDWLLNL (76 aa)) enclose the BRCT domain.

It belongs to the NAD-dependent DNA ligase family. LigA subfamily. Requires Mg(2+) as cofactor. The cofactor is Mn(2+).

The catalysed reaction is NAD(+) + (deoxyribonucleotide)n-3'-hydroxyl + 5'-phospho-(deoxyribonucleotide)m = (deoxyribonucleotide)n+m + AMP + beta-nicotinamide D-nucleotide.. Functionally, DNA ligase that catalyzes the formation of phosphodiester linkages between 5'-phosphoryl and 3'-hydroxyl groups in double-stranded DNA using NAD as a coenzyme and as the energy source for the reaction. It is essential for DNA replication and repair of damaged DNA. This Streptococcus equi subsp. equi (strain 4047) protein is DNA ligase.